The sequence spans 361 residues: Chorismate synthase (361 aa).

NADP(+) is bound by residues arginine 48 and arginine 54. FMN is bound by residues 125–127, 238–239, glycine 278, 293–297, and arginine 319; these read RSS, NA, and KPTSS.

Belongs to the chorismate synthase family. As to quaternary structure, homotetramer. Requires FMNH2 as cofactor.

The enzyme catalyses 5-O-(1-carboxyvinyl)-3-phosphoshikimate = chorismate + phosphate. It functions in the pathway metabolic intermediate biosynthesis; chorismate biosynthesis; chorismate from D-erythrose 4-phosphate and phosphoenolpyruvate: step 7/7. Its function is as follows. Catalyzes the anti-1,4-elimination of the C-3 phosphate and the C-6 proR hydrogen from 5-enolpyruvylshikimate-3-phosphate (EPSP) to yield chorismate, which is the branch point compound that serves as the starting substrate for the three terminal pathways of aromatic amino acid biosynthesis. This reaction introduces a second double bond into the aromatic ring system. The sequence is that of Chorismate synthase from Salmonella arizonae (strain ATCC BAA-731 / CDC346-86 / RSK2980).